A 370-amino-acid chain; its full sequence is 3-dehydroquinate synthase (370 aa).

NAD(+) contacts are provided by residues 107–111, 131–132, K144, and K153; these read GVIGD and TS. Positions 186, 249, and 267 each coordinate Zn(2+).

Belongs to the sugar phosphate cyclases superfamily. Dehydroquinate synthase family. Co(2+) serves as cofactor. The cofactor is Zn(2+). It depends on NAD(+) as a cofactor.

It localises to the cytoplasm. It carries out the reaction 7-phospho-2-dehydro-3-deoxy-D-arabino-heptonate = 3-dehydroquinate + phosphate. It participates in metabolic intermediate biosynthesis; chorismate biosynthesis; chorismate from D-erythrose 4-phosphate and phosphoenolpyruvate: step 2/7. Functionally, catalyzes the conversion of 3-deoxy-D-arabino-heptulosonate 7-phosphate (DAHP) to dehydroquinate (DHQ). The chain is 3-dehydroquinate synthase from Jannaschia sp. (strain CCS1).